The sequence spans 326 residues: GTP 3',8-cyclase (326 aa).

The region spanning 4–227 (KHERNINYMR…LTPQKNILGN (224 aa)) is the Radical SAM core domain. Arg13 contacts GTP. [4Fe-4S] cluster is bound by residues Cys20 and Cys24. Residue Tyr26 coordinates S-adenosyl-L-methionine. Residue Cys27 coordinates [4Fe-4S] cluster. Arg63 contributes to the GTP binding site. Gly67 contributes to the S-adenosyl-L-methionine binding site. Thr94 contributes to the GTP binding site. Ser118 lines the S-adenosyl-L-methionine pocket. Lys155 serves as a coordination point for GTP. Met189 lines the S-adenosyl-L-methionine pocket. Positions 253 and 256 each coordinate [4Fe-4S] cluster. Position 258–260 (258–260 (RIR)) interacts with GTP. [4Fe-4S] cluster is bound at residue Cys270.

Belongs to the radical SAM superfamily. MoaA family. As to quaternary structure, monomer and homodimer. Requires [4Fe-4S] cluster as cofactor.

The enzyme catalyses GTP + AH2 + S-adenosyl-L-methionine = (8S)-3',8-cyclo-7,8-dihydroguanosine 5'-triphosphate + 5'-deoxyadenosine + L-methionine + A + H(+). It participates in cofactor biosynthesis; molybdopterin biosynthesis. Catalyzes the cyclization of GTP to (8S)-3',8-cyclo-7,8-dihydroguanosine 5'-triphosphate. The polypeptide is GTP 3',8-cyclase (Syntrophomonas wolfei subsp. wolfei (strain DSM 2245B / Goettingen)).